A 170-amino-acid chain; its full sequence is ATP synthase subunit b (170 aa).

The helical transmembrane segment at glutamine 20 to isoleucine 42 threads the bilayer.

The protein belongs to the ATPase B chain family. In terms of assembly, F-type ATPases have 2 components, F(1) - the catalytic core - and F(0) - the membrane proton channel. F(1) has five subunits: alpha(3), beta(3), gamma(1), delta(1), epsilon(1). F(0) has three main subunits: a(1), b(2) and c(10-14). The alpha and beta chains form an alternating ring which encloses part of the gamma chain. F(1) is attached to F(0) by a central stalk formed by the gamma and epsilon chains, while a peripheral stalk is formed by the delta and b chains.

Its subcellular location is the cell membrane. Its function is as follows. F(1)F(0) ATP synthase produces ATP from ADP in the presence of a proton or sodium gradient. F-type ATPases consist of two structural domains, F(1) containing the extramembraneous catalytic core and F(0) containing the membrane proton channel, linked together by a central stalk and a peripheral stalk. During catalysis, ATP synthesis in the catalytic domain of F(1) is coupled via a rotary mechanism of the central stalk subunits to proton translocation. Component of the F(0) channel, it forms part of the peripheral stalk, linking F(1) to F(0). This is ATP synthase subunit b from Bacillus velezensis (strain DSM 23117 / BGSC 10A6 / LMG 26770 / FZB42) (Bacillus amyloliquefaciens subsp. plantarum).